Reading from the N-terminus, the 191-residue chain is Putative manganese efflux pump MntP (191 aa).

6 consecutive transmembrane segments (helical) span residues Pro-3 to Gly-23, Leu-37 to Leu-57, Val-65 to Ile-85, Trp-107 to Phe-129, Cys-144 to Gly-164, and Ile-169 to Gly-189.

Belongs to the MntP (TC 9.B.29) family.

It is found in the cell inner membrane. Functionally, probably functions as a manganese efflux pump. This chain is Putative manganese efflux pump MntP, found in Stenotrophomonas maltophilia (strain K279a).